Reading from the N-terminus, the 98-residue chain is Co-chaperonin GroES (98 aa).

It belongs to the GroES chaperonin family. In terms of assembly, heptamer of 7 subunits arranged in a ring. Interacts with the chaperonin GroEL.

It localises to the cytoplasm. Functionally, together with the chaperonin GroEL, plays an essential role in assisting protein folding. The GroEL-GroES system forms a nano-cage that allows encapsulation of the non-native substrate proteins and provides a physical environment optimized to promote and accelerate protein folding. GroES binds to the apical surface of the GroEL ring, thereby capping the opening of the GroEL channel. This chain is Co-chaperonin GroES, found in Renibacterium salmoninarum (strain ATCC 33209 / DSM 20767 / JCM 11484 / NBRC 15589 / NCIMB 2235).